Reading from the N-terminus, the 196-residue chain is Ribonuclease HII (196 aa).

Residues 15-196 enclose the RNase H type-2 domain; sequence FILAGIDEAG…RLSFTKALYK (182 aa). The a divalent metal cation site is built by aspartate 21, glutamate 22, and aspartate 112.

It belongs to the RNase HII family. The cofactor is Mn(2+). Requires Mg(2+) as cofactor.

It is found in the cytoplasm. The enzyme catalyses Endonucleolytic cleavage to 5'-phosphomonoester.. Endonuclease that specifically degrades the RNA of RNA-DNA hybrids. This is Ribonuclease HII from Rickettsia bellii (strain OSU 85-389).